The primary structure comprises 665 residues: Pre-mRNA-processing factor 39 (665 aa).

Residues 1–11 (MQNSHMEEYRN) show a composition bias toward basic and acidic residues. A disordered region spans residues 1–28 (MQNSHMEEYRNSDNGSTGNSSEVAVVEH). A compositionally biased stretch (polar residues) spans 12 to 22 (SDNGSTGNSSE). The residue at position 44 (Ser44) is a Phosphoserine. HAT repeat units lie at residues 107-139 (NHLMAARKAFDKFFVHYPYCYGYWKKYADLEKR), 141-173 (DNIKQSDEVYRRGLQAIPLSVDLWIHYINFLKE), 181-216 (ETNTTIRGTFEHAVLAAGTDFRSDKLWEMYINWENE), 218-251 (GNLREVTAVYDRILGIPTQLYSHHFQRFKEHVQN), 331-363 (FEEGIKRPYFHVKPLEKAQPKKNWKEYLEFEIE), 365-397 (GTHERVVVLFERCVISCALYEEFWIKYAKYMEN), and 402-434 (GVRHVFSRACTVHLPKKPMAHMLWAAFEEQQGN). The segment covering 599 to 622 (QDTLKRKAENGSEEPEEKKAHTED) has biased composition (basic and acidic residues). A disordered region spans residues 599 to 625 (QDTLKRKAENGSEEPEEKKAHTEDLSS).

It belongs to the PRP39 family.

It localises to the nucleus. Functionally, involved in pre-mRNA splicing. This Mus musculus (Mouse) protein is Pre-mRNA-processing factor 39 (Prpf39).